Consider the following 224-residue polypeptide: ATP-dependent dethiobiotin synthetase BioD (224 aa).

14 to 19 (GIGKTV) is an ATP binding site. T18 lines the Mg(2+) pocket. Residue K39 is part of the active site. Position 43 (S43) interacts with substrate. ATP-binding positions include D56, 117 to 120 (EGVG), and 177 to 178 (NE). Mg(2+) is bound by residues D56 and E117.

Belongs to the dethiobiotin synthetase family. In terms of assembly, homodimer. The cofactor is Mg(2+).

The protein resides in the cytoplasm. The catalysed reaction is (7R,8S)-7,8-diammoniononanoate + CO2 + ATP = (4R,5S)-dethiobiotin + ADP + phosphate + 3 H(+). It participates in cofactor biosynthesis; biotin biosynthesis; biotin from 7,8-diaminononanoate: step 1/2. Catalyzes a mechanistically unusual reaction, the ATP-dependent insertion of CO2 between the N7 and N8 nitrogen atoms of 7,8-diaminopelargonic acid (DAPA, also called 7,8-diammoniononanoate) to form a ureido ring. In Xanthomonas campestris pv. campestris (strain ATCC 33913 / DSM 3586 / NCPPB 528 / LMG 568 / P 25), this protein is ATP-dependent dethiobiotin synthetase BioD.